The sequence spans 132 residues: Small ribosomal subunit protein uS8 (132 aa).

Belongs to the universal ribosomal protein uS8 family. Part of the 30S ribosomal subunit. Contacts proteins S5 and S12.

Its function is as follows. One of the primary rRNA binding proteins, it binds directly to 16S rRNA central domain where it helps coordinate assembly of the platform of the 30S subunit. This is Small ribosomal subunit protein uS8 from Limosilactobacillus fermentum (strain NBRC 3956 / LMG 18251) (Lactobacillus fermentum).